The sequence spans 466 residues: Trigger factor (466 aa).

The region spanning 162–243 (GDVVSIDLSA…VRSVKERELP (82 aa)) is the PPIase FKBP-type domain. The tract at residues 428-466 (GNTIDTSEFFGKRVSAGEAEEAEPADEGAARAASDEATT) is disordered. Positions 457-466 (ARAASDEATT) are enriched in low complexity.

It belongs to the FKBP-type PPIase family. Tig subfamily.

It localises to the cytoplasm. It carries out the reaction [protein]-peptidylproline (omega=180) = [protein]-peptidylproline (omega=0). Functionally, involved in protein export. Acts as a chaperone by maintaining the newly synthesized protein in an open conformation. Functions as a peptidyl-prolyl cis-trans isomerase. In Mycobacterium bovis (strain BCG / Tokyo 172 / ATCC 35737 / TMC 1019), this protein is Trigger factor.